The chain runs to 297 residues: Bifunctional protein FolD 2 (297 aa).

NADP(+) contacts are provided by residues 177–179 (GKS), I202, and I243.

The protein belongs to the tetrahydrofolate dehydrogenase/cyclohydrolase family. Homodimer.

The enzyme catalyses (6R)-5,10-methylene-5,6,7,8-tetrahydrofolate + NADP(+) = (6R)-5,10-methenyltetrahydrofolate + NADPH. It carries out the reaction (6R)-5,10-methenyltetrahydrofolate + H2O = (6R)-10-formyltetrahydrofolate + H(+). The protein operates within one-carbon metabolism; tetrahydrofolate interconversion. Its function is as follows. Catalyzes the oxidation of 5,10-methylenetetrahydrofolate to 5,10-methenyltetrahydrofolate and then the hydrolysis of 5,10-methenyltetrahydrofolate to 10-formyltetrahydrofolate. This is Bifunctional protein FolD 2 from Rhizorhabdus wittichii (strain DSM 6014 / CCUG 31198 / JCM 15750 / NBRC 105917 / EY 4224 / RW1) (Sphingomonas wittichii).